We begin with the raw amino-acid sequence, 138 residues long: Histone H2B.4 (138 aa).

Positions M1–E39 are enriched in basic and acidic residues. The disordered stretch occupies residues M1–S48. A2 is subject to N,N,N-trimethylalanine; alternate. N,N-dimethylalanine; alternate is present on A2. A2 carries the post-translational modification N-methylalanine; alternate. The residue at position 4 (K4) is an N6-methyllysine. N6-acetyllysine is present on residues K8 and K13. K14 is modified (N6,N6-dimethyllysine). An N6-acetyllysine mark is found at K18, K23, K29, and K30. Residue K135 forms a Glycyl lysine isopeptide (Lys-Gly) (interchain with G-Cter in ubiquitin) linkage.

Belongs to the histone H2B family. In terms of assembly, the nucleosome is a histone octamer containing two molecules each of H2A, H2B, H3 and H4 assembled in one H3-H4 heterotetramer and two H2A-H2B heterodimers. The octamer wraps approximately 147 bp of DNA. Post-translationally, can be acetylated to form H2BK6ac, H2BK33ac and H2BK34ac. Monoubiquitinated by BRE1 to form H2BK143ub1 and deubiquitinated by UBP26. Required for heterochromatic histone H3 di- and trimethylation at H3K4me. May give a specific tag for epigenetic transcriptional activation.

It localises to the nucleus. Its subcellular location is the chromosome. Its function is as follows. Core component of nucleosome. Nucleosomes wrap and compact DNA into chromatin, limiting DNA accessibility to the cellular machineries which require DNA as a template. Histones thereby play a central role in transcription regulation, DNA repair, DNA replication and chromosomal stability. DNA accessibility is regulated via a complex set of post-translational modifications of histones, also called histone code, and nucleosome remodeling. The protein is Histone H2B.4 of Arabidopsis thaliana (Mouse-ear cress).